A 447-amino-acid chain; its full sequence is Methylenetetrahydrofolate--tRNA-(uracil-5-)-methyltransferase TrmFO (447 aa).

Residue 13 to 18 (GAGLAG) coordinates FAD.

The protein belongs to the MnmG family. TrmFO subfamily. FAD is required as a cofactor.

The protein resides in the cytoplasm. The enzyme catalyses uridine(54) in tRNA + (6R)-5,10-methylene-5,6,7,8-tetrahydrofolate + NADH + H(+) = 5-methyluridine(54) in tRNA + (6S)-5,6,7,8-tetrahydrofolate + NAD(+). It catalyses the reaction uridine(54) in tRNA + (6R)-5,10-methylene-5,6,7,8-tetrahydrofolate + NADPH + H(+) = 5-methyluridine(54) in tRNA + (6S)-5,6,7,8-tetrahydrofolate + NADP(+). Functionally, catalyzes the folate-dependent formation of 5-methyl-uridine at position 54 (M-5-U54) in all tRNAs. The protein is Methylenetetrahydrofolate--tRNA-(uracil-5-)-methyltransferase TrmFO of Streptococcus thermophilus (strain ATCC BAA-250 / LMG 18311).